Here is a 504-residue protein sequence, read N- to C-terminus: Maturase K (504 aa).

This sequence belongs to the intron maturase 2 family. MatK subfamily.

Its subcellular location is the plastid. It localises to the chloroplast. In terms of biological role, usually encoded in the trnK tRNA gene intron. Probably assists in splicing its own and other chloroplast group II introns. The chain is Maturase K from Impatiens capensis (Spotted jewelweed).